Consider the following 306-residue polypeptide: UDP-N-acetylenolpyruvoylglucosamine reductase (306 aa).

Residues 34–199 (KSGGAAEWLF…VAATFRGHAE (166 aa)) enclose the FAD-binding PCMH-type domain. Arginine 179 is a catalytic residue. The tract at residues 215 to 234 (REASQPLRSRTGGSTFKNPQ) is disordered. Residues 220 to 232 (PLRSRTGGSTFKN) are compositionally biased toward polar residues. Catalysis depends on serine 228, which acts as the Proton donor. Residue glutamate 298 is part of the active site.

Belongs to the MurB family. FAD is required as a cofactor.

Its subcellular location is the cytoplasm. It carries out the reaction UDP-N-acetyl-alpha-D-muramate + NADP(+) = UDP-N-acetyl-3-O-(1-carboxyvinyl)-alpha-D-glucosamine + NADPH + H(+). It participates in cell wall biogenesis; peptidoglycan biosynthesis. Functionally, cell wall formation. This is UDP-N-acetylenolpyruvoylglucosamine reductase from Rhizorhabdus wittichii (strain DSM 6014 / CCUG 31198 / JCM 15750 / NBRC 105917 / EY 4224 / RW1) (Sphingomonas wittichii).